Here is a 598-residue protein sequence, read N- to C-terminus: Mitogen-activated protein kinase 19 (598 aa).

Residues 25 to 316 (YRILEVIGKG…AAEALADPYF (292 aa)) enclose the Protein kinase domain. ATP is bound by residues 31-39 (IGKGSYGVV) and Lys54. Asp151 functions as the Proton acceptor in the catalytic mechanism. Position 187 is a phosphothreonine (Thr187). The TXY signature appears at 187-189 (TDY). Tyr189 is subject to Phosphotyrosine. At Thr192 the chain carries Phosphothreonine. Residues 396 to 486 (GKSGPVIPPD…VTYENDRNLK (91 aa)) form a disordered region. Residues 414-425 (SAVHSSAVNSNA) are compositionally biased toward low complexity.

Belongs to the protein kinase superfamily. CMGC Ser/Thr protein kinase family. MAP kinase subfamily. Post-translationally, dually phosphorylated on Thr-187 and Tyr-189, which activates the enzyme.

The catalysed reaction is L-seryl-[protein] + ATP = O-phospho-L-seryl-[protein] + ADP + H(+). It catalyses the reaction L-threonyl-[protein] + ATP = O-phospho-L-threonyl-[protein] + ADP + H(+). Its activity is regulated as follows. Activated by threonine and tyrosine phosphorylation. This Arabidopsis thaliana (Mouse-ear cress) protein is Mitogen-activated protein kinase 19 (MPK19).